The primary structure comprises 664 residues: Kinesin-like protein KIF2B (664 aa).

A Phosphothreonine; by PLK1 modification is found at threonine 125. Residues 149-177 (CLREIEKLQKQREKRRRLQLEIRARRALD) adopt a coiled-coil conformation. Residue serine 204 is modified to Phosphoserine; by PLK1. The region spanning 213 to 543 (RICVCVRKRP…LRYANRVKEL (331 aa)) is the Kinesin motor domain. 303-310 (GQTGSGKT) contacts ATP. Residues 583–607 (VQKEEEKESDELTSTKEPAASWSRS) form a disordered region. A coiled-coil region spans residues 642–663 (VLTEIQKKLQLLRDDLQKKSQA).

It belongs to the TRAFAC class myosin-kinesin ATPase superfamily. Kinesin family. MCAK/KIF2 subfamily. Post-translationally, phosphorylation at Thr-125 by PLK1 is required for activity in the correction of kinetochore-microtubules attachment errors, while phosphorylation at Ser-204 also by PLK1 is required for the kinetochore localization and activity in prometaphase.

The protein resides in the cytoplasm. The protein localises to the cytoskeleton. It localises to the microtubule organizing center. Its subcellular location is the centrosome. It is found in the spindle. The protein resides in the chromosome. The protein localises to the centromere. It localises to the kinetochore. Plus end-directed microtubule-dependent motor required for spindle assembly and chromosome movement. Has microtubule depolymerization activity. Plays a role in chromosome congression. In Rattus norvegicus (Rat), this protein is Kinesin-like protein KIF2B.